A 278-amino-acid polypeptide reads, in one-letter code: 1-acyl-sn-glycerol-3-phosphate acyltransferase beta (278 aa).

The first 23 residues, 1–23, serve as a signal peptide directing secretion; sequence MDPWPWLTAALLLLLLLVQLSRT. At 24–29 the chain is on the lumenal side; the sequence is ARFYAK. The chain crosses the membrane as a helical span at residues 30 to 50; it reads VGLYCVLCLSFSAAASIVCLL. Over 51–121 the chain is Cytoplasmic; that stretch reads RHGGRTVDNM…PKRCVQIAKR (71 aa). The HXXXXD motif motif lies at 98 to 103; it reads HQSILD. A helical membrane pass occupies residues 122 to 142; that stretch reads ELMFTGPVGLIMYLGGVYFIN. Residues 143–278 lie on the Lumenal side of the membrane; sequence RQQARTAMSV…IKEPGVLPAQ (136 aa). The EGTR motif motif lies at 172 to 175; sequence EGTR.

The protein belongs to the 1-acyl-sn-glycerol-3-phosphate acyltransferase family. Expressed at high levels in the liver, at intermediate levels in the kidney, gut, heart and skeletal muscles. Undetectable in brain and spleen.

The protein resides in the endoplasmic reticulum membrane. The catalysed reaction is a 1-acyl-sn-glycero-3-phosphate + an acyl-CoA = a 1,2-diacyl-sn-glycero-3-phosphate + CoA. The enzyme catalyses 1-(9Z-octadecenoyl)-sn-glycero-3-phosphate + (9Z)-octadecenoyl-CoA = 1,2-di-(9Z-octadecenoyl)-sn-glycero-3-phosphate + CoA. It catalyses the reaction 1-(9Z-octadecenoyl)-sn-glycero-3-phosphate + hexadecanoyl-CoA = 1-(9Z)-octadecenoyl-2-hexadecanoyl-sn-glycero-3-phosphate + CoA. It carries out the reaction heptadecanoyl-CoA + 1-(9Z-octadecenoyl)-sn-glycero-3-phosphate = 1-(9Z)-octadecenoyl-2-heptadecanoyl-sn-glycero-3-phosphate + CoA. The catalysed reaction is 1-(9Z-octadecenoyl)-sn-glycero-3-phosphate + (9Z,12Z)-octadecadienoyl-CoA = 1-(9Z)-octadecenoyl-2-(9Z,12Z)-octadecadienoyl-sn-glycero-3-phosphate + CoA. The enzyme catalyses 1-(9Z-octadecenoyl)-sn-glycero-3-phosphate + tetradecanoyl-CoA = 1-(9Z)-octadecenoyl-2-tetradecanoyl-sn-glycero-3-phosphate + CoA. It catalyses the reaction pentadecanoyl-CoA + 1-(9Z-octadecenoyl)-sn-glycero-3-phosphate = 1-(9Z)-octadecenoyl-2-pentadecanoyl-sn-glycero-3-phosphate + CoA. It carries out the reaction 1-hexadecanoyl-sn-glycero-3-phosphate + (9Z)-octadecenoyl-CoA = 1-hexadecanoyl-2-(9Z-octadecenoyl)-sn-glycero-3-phosphate + CoA. The catalysed reaction is 1-tetradecanoyl-sn-glycerol 3-phosphate + (9Z)-octadecenoyl-CoA = 1-tetradecanoyl-2-(9Z)-octadecenoyl-sn-glycero-3-phosphate + CoA. The enzyme catalyses 1-(9Z,12Z,15Z)-octadecatrienoyl-sn-glycero-3-phosphate + (9Z)-octadecenoyl-CoA = 1-(9Z,12Z,15Z)-octadecatrienoyl-2-(9Z)-octadecenoyl-sn-glycero-3-phosphate + CoA. It catalyses the reaction 1-(6Z,9Z,12Z-octadecatrienoyl)-sn-glycero-3-phosphate + (9Z)-octadecenoyl-CoA = (6Z,9Z,12Z)-octadecatrienoyl-2-(9Z)-octadecenoyl-sn-glycero-3-phosphate + CoA. It carries out the reaction 1-eicosanoyl-sn-glycero-3-phosphate + (9Z)-octadecenoyl-CoA = 1-eicosanoyl-2-(9Z)-octadecenoyl-sn-glycero-3-phosphate + CoA. The catalysed reaction is 1-hexadecanoyl-sn-glycero-3-phosphate + octadecanoyl-CoA = 1-hexadecanoyl-2-octadecanoyl-sn-glycero-3-phosphate + CoA. The enzyme catalyses 1-hexadecanoyl-sn-glycero-3-phosphate + (5Z,8Z,11Z,14Z)-eicosatetraenoyl-CoA = 1-hexadecanoyl-2-(5Z,8Z,11Z,14Z-eicosatetraenoyl)-sn-glycero-3-phosphate + CoA. It catalyses the reaction 1-hexadecanoyl-sn-glycero-3-phosphate + hexadecanoyl-CoA = 1,2-dihexadecanoyl-sn-glycero-3-phosphate + CoA. It carries out the reaction 1-hexadecanoyl-sn-glycero-3-phosphate + tetradecanoyl-CoA = 1-hexadecanoyl-2-tetradecanoyl-sn-glycero-3-phosphate + CoA. The catalysed reaction is (11Z)-octadecenoyl-CoA + 1-(9Z-octadecenoyl)-sn-glycero-3-phosphate = 1-(9Z)-octadecenoyl-2-(11Z)-octadecenoyl-sn-glycero-3-phosphate + CoA. It functions in the pathway phospholipid metabolism; CDP-diacylglycerol biosynthesis; CDP-diacylglycerol from sn-glycerol 3-phosphate: step 2/3. Converts 1-acyl-sn-glycerol-3-phosphate (lysophosphatidic acid or LPA) into 1,2-diacyl-sn-glycerol-3-phosphate (phosphatidic acid or PA) by incorporating an acyl moiety at the sn-2 position of the glycerol backbone. In Mus musculus (Mouse), this protein is 1-acyl-sn-glycerol-3-phosphate acyltransferase beta (Agpat2).